A 97-amino-acid chain; its full sequence is Na(+)/H(+) antiporter subunit F1 (97 aa).

The next 3 helical transmembrane spans lie at 3–23 (FKIF…AMLI), 35–55 (VVAL…FSIL), and 60–80 (YMLV…AVFS).

It belongs to the CPA3 antiporters (TC 2.A.63) subunit F family. As to quaternary structure, may form a heterooligomeric complex that consists of seven subunits: mnhA1, mnhB1, mnhC1, mnhD1, mnhE1, mnhF1 and mnhG1.

It is found in the cell membrane. Its function is as follows. Mnh complex is a Na(+)/H(+) antiporter involved in Na(+) excretion. This is Na(+)/H(+) antiporter subunit F1 (mnhF1) from Staphylococcus epidermidis (strain ATCC 35984 / DSM 28319 / BCRC 17069 / CCUG 31568 / BM 3577 / RP62A).